The chain runs to 170 residues: 3-hydroxydecanoyl-[acyl-carrier-protein] dehydratase (170 aa).

Residue H69 is part of the active site.

This sequence belongs to the thioester dehydratase family. FabA subfamily. Homodimer.

It localises to the cytoplasm. The catalysed reaction is a (3R)-hydroxyacyl-[ACP] = a (2E)-enoyl-[ACP] + H2O. The enzyme catalyses (3R)-hydroxydecanoyl-[ACP] = (2E)-decenoyl-[ACP] + H2O. It carries out the reaction (2E)-decenoyl-[ACP] = (3Z)-decenoyl-[ACP]. It participates in lipid metabolism; fatty acid biosynthesis. Its function is as follows. Necessary for the introduction of cis unsaturation into fatty acids. Catalyzes the dehydration of (3R)-3-hydroxydecanoyl-ACP to E-(2)-decenoyl-ACP and then its isomerization to Z-(3)-decenoyl-ACP. Can catalyze the dehydratase reaction for beta-hydroxyacyl-ACPs with saturated chain lengths up to 16:0, being most active on intermediate chain length. In Caulobacter vibrioides (strain ATCC 19089 / CIP 103742 / CB 15) (Caulobacter crescentus), this protein is 3-hydroxydecanoyl-[acyl-carrier-protein] dehydratase.